The primary structure comprises 427 residues: Mitochondrial fission protein ELM1 (427 aa).

As to quaternary structure, interacts with DRP3 and DRP3B.

The protein localises to the mitochondrion outer membrane. Plant-specific factor involved in mitochondria fission. Is required for the correct localization of DRP3A from the cytosol to mitochondrial fission sites. Does not seem to be required for peroxisomal division. The protein is Mitochondrial fission protein ELM1 (ELM1) of Arabidopsis thaliana (Mouse-ear cress).